A 333-amino-acid polypeptide reads, in one-letter code: DNA-directed RNA polymerase subunit alpha (333 aa).

Residues 1–239 (MSAVLDKGSL…TQARCFLNIA (239 aa)) form an alpha N-terminal domain (alpha-NTD) region. Residues 259 to 333 (DASDLLSARI…SLGMNLDSHG (75 aa)) are alpha C-terminal domain (alpha-CTD).

It belongs to the RNA polymerase alpha chain family. Homodimer. The RNAP catalytic core consists of 2 alpha, 1 beta, 1 beta' and 1 omega subunit. When a sigma factor is associated with the core the holoenzyme is formed, which can initiate transcription.

It catalyses the reaction RNA(n) + a ribonucleoside 5'-triphosphate = RNA(n+1) + diphosphate. In terms of biological role, DNA-dependent RNA polymerase catalyzes the transcription of DNA into RNA using the four ribonucleoside triphosphates as substrates. This Neorickettsia sennetsu (strain ATCC VR-367 / Miyayama) (Ehrlichia sennetsu) protein is DNA-directed RNA polymerase subunit alpha.